Consider the following 199-residue polypeptide: Peroxiredoxin-1 (199 aa).

Ser-2 is subject to N-acetylserine. One can recognise a Thioredoxin domain in the interval 6-165; it reads AKIGHPAPNF…TLRLVQAFQF (160 aa). Residue Lys-7 is modified to N6-acetyllysine; alternate. Residue Lys-7 forms a Glycyl lysine isopeptide (Lys-Gly) (interchain with G-Cter in SUMO2); alternate linkage. An N6-acetyllysine mark is found at Lys-16 and Lys-27. Phosphoserine is present on Ser-32. Residue Lys-35 is modified to N6-acetyllysine; alternate. Lys-35 carries the post-translational modification N6-succinyllysine; alternate. Cys-52 acts as the Cysteine sulfenic acid (-SOH) intermediate in catalysis. Thr-90 carries the post-translational modification Phosphothreonine; by CDK1. A Glycyl lysine isopeptide (Lys-Gly) (interchain with G-Cter in SUMO2) cross-link involves residue Lys-120. The residue at position 136 (Lys-136) is an N6-acetyllysine. The tract at residues 176–199 is disordered; the sequence is GWKPGSDTIKPDVQKSKEYFSKQK. Residues 184–199 show a composition bias toward basic and acidic residues; that stretch reads IKPDVQKSKEYFSKQK. A Glycyl lysine isopeptide (Lys-Gly) (interchain with G-Cter in SUMO1) cross-link involves residue Lys-185. The residue at position 197 (Lys-197) is an N6-acetyllysine.

Belongs to the peroxiredoxin family. AhpC/Prx1 subfamily. Homodimer; disulfide-linked, upon oxidation. 5 homodimers assemble to form a ring-like decamer. Interacts with GDPD5; forms a mixed-disulfide with GDPD5. Interacts with SESN1 and SESN2. Interacts with FAM107A. In terms of processing, phosphorylated on Thr-90 during the M-phase, which leads to a more than 80% decrease in enzymatic activity. Acetylation increases reducing activity and resistance to superoxidation. Deacetylated by HDAC6 which decreases reducing activity. Post-translationally, the enzyme can be inactivated by further oxidation of the cysteine sulfenic acid (C(P)-SOH) to sulphinic acid (C(P)-SO2H) instead of its condensation to a disulfide bond. It can be reactivated by forming a transient disulfide bond with sulfiredoxin SRXN1, which reduces the cysteine sulfinic acid in an ATP- and Mg-dependent manner.

The protein resides in the cytoplasm. The protein localises to the melanosome. It catalyses the reaction a hydroperoxide + [thioredoxin]-dithiol = an alcohol + [thioredoxin]-disulfide + H2O. Functionally, thiol-specific peroxidase that catalyzes the reduction of hydrogen peroxide and organic hydroperoxides to water and alcohols, respectively. Plays a role in cell protection against oxidative stress by detoxifying peroxides and as sensor of hydrogen peroxide-mediated signaling events. Might participate in the signaling cascades of growth factors and tumor necrosis factor-alpha by regulating the intracellular concentrations of H(2)O(2). Reduces an intramolecular disulfide bond in GDPD5 that gates the ability to GDPD5 to drive postmitotic motor neuron differentiation. This Homo sapiens (Human) protein is Peroxiredoxin-1 (PRDX1).